Reading from the N-terminus, the 145-residue chain is 3-hydroxyacyl-[acyl-carrier-protein] dehydratase FabZ (145 aa).

Histidine 52 is an active-site residue.

This sequence belongs to the thioester dehydratase family. FabZ subfamily.

It is found in the cytoplasm. It carries out the reaction a (3R)-hydroxyacyl-[ACP] = a (2E)-enoyl-[ACP] + H2O. Functionally, involved in unsaturated fatty acids biosynthesis. Catalyzes the dehydration of short chain beta-hydroxyacyl-ACPs and long chain saturated and unsaturated beta-hydroxyacyl-ACPs. The polypeptide is 3-hydroxyacyl-[acyl-carrier-protein] dehydratase FabZ (Deinococcus radiodurans (strain ATCC 13939 / DSM 20539 / JCM 16871 / CCUG 27074 / LMG 4051 / NBRC 15346 / NCIMB 9279 / VKM B-1422 / R1)).